Consider the following 341-residue polypeptide: Biotin synthase (341 aa).

A Radical SAM core domain is found at 56 to 285; that stretch reads ADIQRAALLS…KARVRLSAGR (230 aa). [4Fe-4S] cluster is bound by residues Cys71, Cys75, and Cys78. Positions 116, 148, 208, and 280 each coordinate [2Fe-2S] cluster.

This sequence belongs to the radical SAM superfamily. Biotin synthase family. As to quaternary structure, homodimer. The cofactor is [4Fe-4S] cluster. [2Fe-2S] cluster is required as a cofactor.

The catalysed reaction is (4R,5S)-dethiobiotin + (sulfur carrier)-SH + 2 reduced [2Fe-2S]-[ferredoxin] + 2 S-adenosyl-L-methionine = (sulfur carrier)-H + biotin + 2 5'-deoxyadenosine + 2 L-methionine + 2 oxidized [2Fe-2S]-[ferredoxin]. It functions in the pathway cofactor biosynthesis; biotin biosynthesis; biotin from 7,8-diaminononanoate: step 2/2. Functionally, catalyzes the conversion of dethiobiotin (DTB) to biotin by the insertion of a sulfur atom into dethiobiotin via a radical-based mechanism. The protein is Biotin synthase of Methylorubrum populi (strain ATCC BAA-705 / NCIMB 13946 / BJ001) (Methylobacterium populi).